We begin with the raw amino-acid sequence, 313 residues long: 2-phosphoglycerate kinase (313 aa).

In terms of domain architecture, ATP-cone spans 8–95 (SRILVTDKEY…LWRRVLKKHS (88 aa)).

This sequence belongs to the 2-phosphoglycerate kinase family. Requires a divalent metal cation as cofactor.

It catalyses the reaction (2R)-2-phosphoglycerate + ATP = (2R)-2,3-bisphosphoglycerate + ADP + H(+). It participates in thermoadapter biosynthesis; cyclic 2,3-diphosphoglycerate biosynthesis; cyclic 2,3-diphosphoglycerate from 2-phospho-D-glycerate: step 1/2. In terms of biological role, catalyzes the phosphorylation of 2-phosphoglycerate to 2,3-diphosphoglycerate. Involved in the biosynthesis of cyclic 2,3-bisphosphoglycerate, a thermoprotectant. The sequence is that of 2-phosphoglycerate kinase from Methanococcus maripaludis (strain C6 / ATCC BAA-1332).